The primary structure comprises 208 residues: LexA repressor (208 aa).

The H-T-H motif DNA-binding region spans 28–48 (RAEIARELGFRSANAAEEHLK). Active-site for autocatalytic cleavage activity residues include Ser125 and Lys162.

Belongs to the peptidase S24 family. In terms of assembly, homodimer.

The catalysed reaction is Hydrolysis of Ala-|-Gly bond in repressor LexA.. Functionally, represses a number of genes involved in the response to DNA damage (SOS response), including recA and lexA. In the presence of single-stranded DNA, RecA interacts with LexA causing an autocatalytic cleavage which disrupts the DNA-binding part of LexA, leading to derepression of the SOS regulon and eventually DNA repair. This Aliivibrio fischeri (strain MJ11) (Vibrio fischeri) protein is LexA repressor.